The primary structure comprises 161 residues: SsrA-binding protein (161 aa).

It belongs to the SmpB family.

The protein localises to the cytoplasm. Its function is as follows. Required for rescue of stalled ribosomes mediated by trans-translation. Binds to transfer-messenger RNA (tmRNA), required for stable association of tmRNA with ribosomes. tmRNA and SmpB together mimic tRNA shape, replacing the anticodon stem-loop with SmpB. tmRNA is encoded by the ssrA gene; the 2 termini fold to resemble tRNA(Ala) and it encodes a 'tag peptide', a short internal open reading frame. During trans-translation Ala-aminoacylated tmRNA acts like a tRNA, entering the A-site of stalled ribosomes, displacing the stalled mRNA. The ribosome then switches to translate the ORF on the tmRNA; the nascent peptide is terminated with the 'tag peptide' encoded by the tmRNA and targeted for degradation. The ribosome is freed to recommence translation, which seems to be the essential function of trans-translation. This is SsrA-binding protein from Desulforamulus reducens (strain ATCC BAA-1160 / DSM 100696 / MI-1) (Desulfotomaculum reducens).